The chain runs to 65 residues: UPF0337 protein gbs1203 (65 aa).

Positions 1-12 (MSEEKFDAKVDK) are enriched in basic and acidic residues. Residues 1–29 (MSEEKFDAKVDKVSGSVKESVGKLTGDKE) form a disordered region.

This sequence belongs to the UPF0337 (CsbD) family.

This is UPF0337 protein gbs1203 from Streptococcus agalactiae serotype III (strain NEM316).